The primary structure comprises 307 residues: E3 ubiquitin-protein ligase PHF7 (307 aa).

The C2HC pre-PHD-type zinc finger occupies serine 30–leucine 68. 4 residues coordinate Zn(2+): cysteine 33, cysteine 36, histidine 58, and cysteine 61. Residues arginine 67–arginine 92 form a required for interaction and ubiquitination of the nucleosome core particle region. Residues lysine 96–arginine 145 form a PHD-type zinc finger. Zn(2+) is bound by residues cysteine 98, cysteine 101, cysteine 110, cysteine 115, histidine 120, cysteine 123, cysteine 141, histidine 144, cysteine 160, cysteine 163, cysteine 179, cysteine 180, histidine 186, cysteine 189, cysteine 204, cysteine 207, cysteine 248, cysteine 253, cysteine 273, cysteine 276, histidine 282, cysteine 285, cysteine 297, and cysteine 300. The required for interaction with ubiquitinated UBE2D2 stretch occupies residues isoleucine 150 to serine 307. Residues cysteine 160–asparagine 208 form an RING-type; degenerate zinc finger. The required for association with and ubiquitination of H3 stretch occupies residues arginine 244–leucine 301.

As to quaternary structure, interacts with MEF2C; the interaction promotes MEF2C binding to its transcription targets. Interacts with GATA4; the interaction promotes GATA4 binding to its transcription targets. Interacts with UBE2D2; the interaction inhibits cleavage of PHF7 and promotes association of the complex with the nucleosome core particle. As to expression, expressed in Leydig cells and in developing spermatids (at protein level). Highly expressed in Sertoli cells in testis.

Its subcellular location is the nucleus. It catalyses the reaction S-ubiquitinyl-[E2 ubiquitin-conjugating enzyme]-L-cysteine + [acceptor protein]-L-lysine = [E2 ubiquitin-conjugating enzyme]-L-cysteine + N(6)-ubiquitinyl-[acceptor protein]-L-lysine.. It participates in protein modification; protein ubiquitination. Functionally, E3 ubiquitin-protein ligase which ubiquitinates histone H3 at 'Lys-14'. Required for male fertility, via inhibition of SPOP-mediated BRDT degradation when in the presence of acetylated histone H4 in early condensing spermatids. Stabilization of BRDT allows it to facilitate histone removal in early condensing spermatids and promote the progression of histone-to-protamine exchange. Promotes the expression of steroidogenesis proteins in the testes, and as a result plays a role in maintaining testosterone levels and repressing osteoclastogenesis. Promotes transcription of cardiac enhancer genes by facilitating binding of cardiac transcription factors such as MEF2C and GATA4 to target gene promoters. Ubiquitinates histone H4. Ubiquitinates histone H2A and H3 as part of the nucleosome core particle. This is E3 ubiquitin-protein ligase PHF7 from Mus musculus (Mouse).